The following is a 111-amino-acid chain: uncharacterized protein (111 aa).

The protein localises to the mitochondrion. This is an uncharacterized protein from Arabidopsis thaliana (Mouse-ear cress).